Reading from the N-terminus, the 125-residue chain is PCNA-associated factor (125 aa).

The disordered stretch occupies residues 1-125; sequence MVRTKADSAG…SEEAADSDDE (125 aa). Positions 8–17 are enriched in low complexity; sequence SAGSSASSGS. Positions 28-39 match the D-box motif; that stretch reads RKTFGSSSSGSN. A PIP-box motif is present at residues 68 to 79; the sequence is QKGIGEFFGSPS. The KEN box motif lies at 85–87; the sequence is KEN. The Initiation motif signature appears at 95 to 107; it reads EAGGSGAGKAPRK. Over residues 115–125 the composition is skewed to acidic residues; that stretch reads PSEEAADSDDE.

As to quaternary structure, interacts with pcna.

The protein resides in the nucleus. It localises to the cytoplasm. It is found in the perinuclear region. Functionally, PCNA-binding protein that acts as a regulator of DNA repair during DNA replication. Following DNA damage, the interaction with pcna is disrupted, facilitating the interaction between monoubiquitinated pcna and the translesion DNA synthesis DNA polymerase eta (polh) at stalled replisomes, facilitating the bypass of replication-fork-blocking lesions. Also acts as a regulator of centrosome number. The sequence is that of PCNA-associated factor from Xenopus tropicalis (Western clawed frog).